Here is a 363-residue protein sequence, read N- to C-terminus: MKYRIAITTGGTGGHVYPALAVAEQFHDKADLFFIGSQYGPEAEMVKTFNIPFYGLPVRGVLGRKWKAFSALYSMIKAIVKARKILQKCMPDIVVGFGSYASFAPLVAAKLKRIPTAIHEQNVRPGLANRMLARLADRVFLSVPDTLHIFTKKSKVRYTGNPIRQSIVDLHYKFEDTKNSSTRHLLVLGGSLGAIAINSIVVDGLSRLFSNRIVIRHQTGVHDWERVKEGYALYGRTNSQVTPFIDDMAEAYQWSDLVLCRAGATTIAELAAVGKPSILIPFPYATHDHQTYNAQFLVRVGAAVLIPEKNVVEVDVIEKIIALFNDRVTLVNMALAAHKHGRIDAATCVANEIIDLLSANAMK.

Residues 12–14 (TGG), Asn122, Arg164, Ser191, Ile245, and Gln290 each bind UDP-N-acetyl-alpha-D-glucosamine.

This sequence belongs to the glycosyltransferase 28 family. MurG subfamily.

Its subcellular location is the cell membrane. It carries out the reaction di-trans,octa-cis-undecaprenyl diphospho-N-acetyl-alpha-D-muramoyl-L-alanyl-D-glutamyl-meso-2,6-diaminopimeloyl-D-alanyl-D-alanine + UDP-N-acetyl-alpha-D-glucosamine = di-trans,octa-cis-undecaprenyl diphospho-[N-acetyl-alpha-D-glucosaminyl-(1-&gt;4)]-N-acetyl-alpha-D-muramoyl-L-alanyl-D-glutamyl-meso-2,6-diaminopimeloyl-D-alanyl-D-alanine + UDP + H(+). It participates in cell wall biogenesis; peptidoglycan biosynthesis. Cell wall formation. Catalyzes the transfer of a GlcNAc subunit on undecaprenyl-pyrophosphoryl-MurNAc-pentapeptide (lipid intermediate I) to form undecaprenyl-pyrophosphoryl-MurNAc-(pentapeptide)GlcNAc (lipid intermediate II). The polypeptide is UDP-N-acetylglucosamine--N-acetylmuramyl-(pentapeptide) pyrophosphoryl-undecaprenol N-acetylglucosamine transferase (Lawsonia intracellularis (strain PHE/MN1-00)).